A 305-amino-acid polypeptide reads, in one-letter code: Glycine--tRNA ligase alpha subunit (305 aa).

The protein belongs to the class-II aminoacyl-tRNA synthetase family. In terms of assembly, tetramer of two alpha and two beta subunits.

Its subcellular location is the cytoplasm. It catalyses the reaction tRNA(Gly) + glycine + ATP = glycyl-tRNA(Gly) + AMP + diphosphate. This Streptococcus pneumoniae (strain Hungary19A-6) protein is Glycine--tRNA ligase alpha subunit.